The sequence spans 190 residues: Large ribosomal subunit protein bL17 (190 aa).

Residues 128 to 190 form a disordered region; it reads KKTAGRKAAQ…VEENNEQNKA (63 aa). Over residues 143 to 154 the composition is skewed to low complexity; the sequence is ALAPAEETPAPT. Acidic residues predominate over residues 179-190; that stretch reads LAVEENNEQNKA.

The protein belongs to the bacterial ribosomal protein bL17 family. In terms of assembly, part of the 50S ribosomal subunit. Contacts protein L32.

The protein is Large ribosomal subunit protein bL17 of Salinispora tropica (strain ATCC BAA-916 / DSM 44818 / JCM 13857 / NBRC 105044 / CNB-440).